Here is a 760-residue protein sequence, read N- to C-terminus: Prolyl endopeptidase (760 aa).

Catalysis depends on charge relay system residues serine 609, aspartate 693, and histidine 730.

This sequence belongs to the peptidase S9A family.

It localises to the cytoplasm. It catalyses the reaction Hydrolysis of Pro-|-Xaa &gt;&gt; Ala-|-Xaa in oligopeptides.. With respect to regulation, inhibited by chymostatin, Boc-Glu(NHO-Bz)-Pyrrolidide, Z-Pro-L-prolinal dimethyacetal and the peptide H-H-L-P-P-P-V-OH. In terms of biological role, cleaves peptide bonds on the C-terminal side of prolyl residues within peptides that are up to approximately 30 amino acids long. This is Prolyl endopeptidase (prep) from Dictyostelium discoideum (Social amoeba).